The chain runs to 425 residues: Non-structural protein 2 (425 aa).

The stretch at 29–64 (VSFDELVALREENAKLKQENEALKAKLHRLESDWTT) forms a coiled coil.

This is Non-structural protein 2 (Segment-6) from Banna virus (BAV).